We begin with the raw amino-acid sequence, 305 residues long: Methionyl-tRNA formyltransferase (305 aa).

111–114 contacts (6S)-5,6,7,8-tetrahydrofolate; it reads SLLP.

It belongs to the Fmt family.

The catalysed reaction is L-methionyl-tRNA(fMet) + (6R)-10-formyltetrahydrofolate = N-formyl-L-methionyl-tRNA(fMet) + (6S)-5,6,7,8-tetrahydrofolate + H(+). Attaches a formyl group to the free amino group of methionyl-tRNA(fMet). The formyl group appears to play a dual role in the initiator identity of N-formylmethionyl-tRNA by promoting its recognition by IF2 and preventing the misappropriation of this tRNA by the elongation apparatus. This chain is Methionyl-tRNA formyltransferase, found in Campylobacter jejuni (strain RM1221).